The primary structure comprises 641 residues: Probable potassium transport system protein Kup 4 (641 aa).

12 helical membrane-spanning segments follow: residues 31–51 (AALG…LYTL), 64–84 (TASA…TISI), 119–139 (ILAV…VITP), 155–175 (GSLK…FFAA), 183–203 (IGAA…VLGL), 221–241 (AIGF…GVFL), 265–285 (WYAI…ALLI), 298–318 (LCPT…TIIA), 355–375 (IYVP…TIAF), 381–401 (LAGA…CLLF), 412–432 (LAVS…FFGA), and 437–457 (IAEG…LMLT).

Belongs to the HAK/KUP transporter (TC 2.A.72) family.

It is found in the cell inner membrane. It catalyses the reaction K(+)(in) + H(+)(in) = K(+)(out) + H(+)(out). Its function is as follows. Transport of potassium into the cell. Likely operates as a K(+):H(+) symporter. This is Probable potassium transport system protein Kup 4 from Bradyrhizobium sp. (strain BTAi1 / ATCC BAA-1182).